Consider the following 209-residue polypeptide: Max dimerization protein 4 (209 aa).

The segment at 6–23 is interaction with SIN3A and SIN3B; the sequence is LLLLLEAAEYLERRDREA. Positions 53–105 constitute a bHLH domain; that stretch reads NNRSSHNELEKHRRAKLRLYLEQLKQLGPLGPDSTRHTTLSLLKRAKMHIKKL. Residues 137–209 are disordered; that stretch reads SVERVRTDST…CRRPGCPGLS (73 aa). The segment covering 153–163 has biased composition (acidic residues); the sequence is DDSEQEVDIEG. Residues 185-195 show a composition bias toward polar residues; the sequence is SLQSSGCSDSS.

As to quaternary structure, efficient DNA binding requires dimerization with another bHLH protein. Binds DNA as a heterodimer with MAX. Interacts with SIN3A AND SIN3B. Interacts with RNF17.

Its subcellular location is the nucleus. Its function is as follows. Transcriptional repressor. Binds with MAX to form a sequence-specific DNA-binding protein complex which recognizes the core sequence 5'-CAC[GA]TG-3'. Antagonizes MYC transcriptional activity by competing for MAX and suppresses MYC dependent cell transformation. The polypeptide is Max dimerization protein 4 (Mxd4) (Mus musculus (Mouse)).